A 157-amino-acid polypeptide reads, in one-letter code: Dihydrofolate reductase type 6 (157 aa).

The region spanning 2 to 156 is the DHFR domain; sequence KISLMAAVSE…IDYTYQIWAK (155 aa).

Belongs to the dihydrofolate reductase family. Homodimer.

It carries out the reaction (6S)-5,6,7,8-tetrahydrofolate + NADP(+) = 7,8-dihydrofolate + NADPH + H(+). It functions in the pathway cofactor biosynthesis; tetrahydrofolate biosynthesis; 5,6,7,8-tetrahydrofolate from 7,8-dihydrofolate: step 1/1. In terms of biological role, key enzyme in folate metabolism. Catalyzes an essential reaction for de novo glycine and purine synthesis, and for DNA precursor synthesis. This is Dihydrofolate reductase type 6 (dhfrVI) from Proteus mirabilis.